Reading from the N-terminus, the 203-residue chain is Putative 3-methyladenine DNA glycosylase (203 aa).

Belongs to the DNA glycosylase MPG family.

The protein is Putative 3-methyladenine DNA glycosylase of Clostridium tetani (strain Massachusetts / E88).